Here is an 81-residue protein sequence, read N- to C-terminus: Large ribosomal subunit protein bL31B (81 aa).

It belongs to the bacterial ribosomal protein bL31 family. Type B subfamily. Part of the 50S ribosomal subunit.

In Lactococcus lactis subsp. cremoris (strain MG1363), this protein is Large ribosomal subunit protein bL31B.